The following is a 131-amino-acid chain: Protein TIFY 5A (131 aa).

The short motif at 9-13 is the EAR element; it reads LELRL. Disordered regions lie at residues 14–44 and 74–131; these read FPTSYDSDSSDTTSVVESTSSGNPQPNEESQ and REMK…HSRR. The span at 16–34 shows a compositional bias: low complexity; sequence TSYDSDSSDTTSVVESTSS. Residues 39 to 74 form the Tify domain; that stretch reads PNEESQRITIFYNGKMCFSSDVTHLQARSIISIASR. Residues 79–100 are compositionally biased toward polar residues; it reads KSSSNGSDPPNKSTSFHHNQLP. The short motif at 105-127 is the Jas element; sequence SMKKSLQSFLQKRKIRIQATSPY. The Nuclear localization signal motif lies at 106–113; sequence MKKSLQSF. The span at 122 to 131 shows a compositional bias: polar residues; that stretch reads QATSPYHSRR.

This sequence belongs to the TIFY/JAZ family. In terms of assembly, interacts with TPL and weakly with COI1, but not with AFPH2/NINJA. Interacts with MYC2, MYB21, MYB24, TIFY10A/JAZ1, TIFY10B/JAZ2, TIFY6B/JAZ3, TIFY6A/JAZ4, TIFY11A/JAZ5, TIFY11B/JAZ6, TIFY7/JAZ9, TIFY9/JAZ10 and TIFY3B/JAZ12. Interacts with RHD6 and RSL1. (Microbial infection) Interacts with the pathogenic Pseudomonas syringae HopZ1a protein. In terms of processing, (Microbial infection) Acetylated by Pseudomonas syringae HopZ1a. Post-translationally, ubiquitinated.

It is found in the nucleus. Repressor of jasmonate responses. Unable to associate strongly with COI1 in the presence of jasmonoyl-isoleucine (JA-Ile) and is therefore more resistant to JA-mediated-degradation than other TIFY/JAZ proteins. Repress gene expression through direct recruitment of the corepressor TOPLESS to cognate transcription factors. Interacts with and suppresses RHD6 and RSL1 transcription factor activities to negatively regulate jasmonate-stimulated root hair development. The polypeptide is Protein TIFY 5A (Arabidopsis thaliana (Mouse-ear cress)).